We begin with the raw amino-acid sequence, 427 residues long: Trigger factor (427 aa).

The 86-residue stretch at 163-248 (GDTVVIDFVG…VHEVKAKEVP (86 aa)) folds into the PPIase FKBP-type domain.

The protein belongs to the FKBP-type PPIase family. Tig subfamily.

It localises to the cytoplasm. The catalysed reaction is [protein]-peptidylproline (omega=180) = [protein]-peptidylproline (omega=0). In terms of biological role, involved in protein export. Acts as a chaperone by maintaining the newly synthesized protein in an open conformation. Functions as a peptidyl-prolyl cis-trans isomerase. This is Trigger factor from Streptococcus equi subsp. zooepidemicus (strain MGCS10565).